Reading from the N-terminus, the 1448-residue chain is Probable serine/threonine-protein kinase irlB (1448 aa).

Positions 412–423 (DDDDYDDYDDDD) are enriched in acidic residues. Positions 412–446 (DDDDYDDYDDDDDHHSGCNNNNNNNNDGDHNEDEN) are disordered. A compositionally biased stretch (low complexity) spans 428–437 (GCNNNNNNNN). Coiled-coil stretches lie at residues 666 to 817 (AESE…EIQN), 887 to 921 (EIQL…SNMK), and 974 to 1016 (ENNK…QDED). The tract at residues 975–1008 (NNKKQNLINDNNNNNNNNNNNNNNNNNNNNNNKL) is disordered. Over residues 978-1008 (KQNLINDNNNNNNNNNNNNNNNNNNNNNNKL) the composition is skewed to low complexity. One can recognise a Protein kinase domain in the interval 1027-1293 (RNESNILGRG…IQNVLNHPLF (267 aa)). ATP contacts are provided by residues 1033–1041 (LGRGSNGTL) and lysine 1056. Aspartate 1151 serves as the catalytic Proton acceptor. Residues 1296 to 1448 (LEKKIQFIDA…TIDYLFNFYN (153 aa)) form the KEN domain.

It belongs to the protein kinase superfamily. Ser/Thr protein kinase family.

The enzyme catalyses L-seryl-[protein] + ATP = O-phospho-L-seryl-[protein] + ADP + H(+). It catalyses the reaction L-threonyl-[protein] + ATP = O-phospho-L-threonyl-[protein] + ADP + H(+). The polypeptide is Probable serine/threonine-protein kinase irlB (irlB-1) (Dictyostelium discoideum (Social amoeba)).